The sequence spans 1412 residues: DNA-directed RNA polymerase subunit beta' (1412 aa).

Positions 70, 72, 85, and 88 each coordinate Zn(2+). 3 residues coordinate Mg(2+): Asp460, Asp462, and Asp464. Residues Cys819, Cys893, Cys900, and Cys903 each contribute to the Zn(2+) site. Residues Glu1392 to Glu1412 are disordered.

This sequence belongs to the RNA polymerase beta' chain family. As to quaternary structure, the RNAP catalytic core consists of 2 alpha, 1 beta, 1 beta' and 1 omega subunit. When a sigma factor is associated with the core the holoenzyme is formed, which can initiate transcription. Mg(2+) serves as cofactor. Requires Zn(2+) as cofactor.

It catalyses the reaction RNA(n) + a ribonucleoside 5'-triphosphate = RNA(n+1) + diphosphate. Functionally, DNA-dependent RNA polymerase catalyzes the transcription of DNA into RNA using the four ribonucleoside triphosphates as substrates. The chain is DNA-directed RNA polymerase subunit beta' from Burkholderia mallei (strain NCTC 10247).